The sequence spans 227 residues: Ribonuclease 3 (227 aa).

Residues 7-132 enclose the RNase III domain; sequence LTAFMDRLGY…VIAAVYLDGG (126 aa). Glu-45 lines the Mg(2+) pocket. Residue Asp-49 is part of the active site. Residues Asp-118 and Glu-121 each contribute to the Mg(2+) site. Glu-121 is an active-site residue. In terms of domain architecture, DRBM spans 157-226; it reads DAKTALQEWA…AKDLLAQLAG (70 aa).

Belongs to the ribonuclease III family. Homodimer. Mg(2+) is required as a cofactor.

Its subcellular location is the cytoplasm. The enzyme catalyses Endonucleolytic cleavage to 5'-phosphomonoester.. In terms of biological role, digests double-stranded RNA. Involved in the processing of primary rRNA transcript to yield the immediate precursors to the large and small rRNAs (23S and 16S). Processes some mRNAs, and tRNAs when they are encoded in the rRNA operon. Processes pre-crRNA and tracrRNA of type II CRISPR loci if present in the organism. The polypeptide is Ribonuclease 3 (Jannaschia sp. (strain CCS1)).